The primary structure comprises 424 residues: CinA-like protein (424 aa).

The protein belongs to the CinA family.

The protein is CinA-like protein of Shewanella baltica (strain OS195).